The chain runs to 51 residues: Large ribosomal subunit protein eL39 (51 aa).

This sequence belongs to the eukaryotic ribosomal protein eL39 family.

In terms of biological role, binds specifically to a region in 26S rRNA near the subunit interface. In Sulfolobus acidocaldarius (strain ATCC 33909 / DSM 639 / JCM 8929 / NBRC 15157 / NCIMB 11770), this protein is Large ribosomal subunit protein eL39 (rpl39e).